We begin with the raw amino-acid sequence, 209 residues long: Molybdenum cofactor guanylyltransferase (209 aa).

Residues 14–16 (LAG), Lys31, and Asp104 contribute to the GTP site. Residue Asp104 participates in Mg(2+) binding.

It belongs to the MobA family. As to quaternary structure, monomer. Mg(2+) serves as cofactor.

It is found in the cytoplasm. The catalysed reaction is Mo-molybdopterin + GTP + H(+) = Mo-molybdopterin guanine dinucleotide + diphosphate. Functionally, transfers a GMP moiety from GTP to Mo-molybdopterin (Mo-MPT) cofactor (Moco or molybdenum cofactor) to form Mo-molybdopterin guanine dinucleotide (Mo-MGD) cofactor. The protein is Molybdenum cofactor guanylyltransferase of Helicobacter pylori (strain J99 / ATCC 700824) (Campylobacter pylori J99).